Here is a 173-residue protein sequence, read N- to C-terminus: uncharacterized protein (173 aa).

The N-terminal stretch at 1–20 (MWYKVLGIVSLCSVYVSTQG) is a signal peptide. N53 carries an N-linked (GlcNAc...) asparagine glycan.

As to expression, component of the acid-insoluble organic matrix of calcified shell layers (at protein level).

Its subcellular location is the secreted. This is an uncharacterized protein from Haliotis asinina (Donkey's ear abalone).